The chain runs to 535 residues: E3 ubiquitin-protein ligase rnf168 (535 aa).

An RING-type zinc finger spans residues 16 to 55; it reads CPICQEILLEPVTLPCKHTLCNPCFQMTVEKASLCCPFCR. An LR motif 1 motif is present at residues 112 to 130; it reads LCKPGEIRQEYEAEVSKIE. The short motif at 145-153 is the UMI motif element; that stretch reads EDYIQKLLA. 2 short sequence motifs (MIU motif) span residues 170–193 and 406–429; these read IEEQLKRDEELARLLSGDMDLSNA and RRKQEEHDRLFALQLQRELDKELK. Residues 429–443 are compositionally biased toward basic and acidic residues; the sequence is KQVNRGKGSPDEYQL. A disordered region spans residues 429–535; that stretch reads KQVNRGKGSP…LDLFQRSAGK (107 aa). Residues 433 to 444 carry the LR motif 2 motif; sequence RGKGSPDEYQLR. Polar residues-rich tracts occupy residues 462-478 and 492-507; these read NEQTPVQDKGGNTQSGY and ITSSQVRQSRAVTNTE.

It belongs to the RNF168 family. In terms of assembly, monomer.

The protein localises to the nucleus. The enzyme catalyses S-ubiquitinyl-[E2 ubiquitin-conjugating enzyme]-L-cysteine + [acceptor protein]-L-lysine = [E2 ubiquitin-conjugating enzyme]-L-cysteine + N(6)-ubiquitinyl-[acceptor protein]-L-lysine.. It functions in the pathway protein modification; protein ubiquitination. E3 ubiquitin-protein ligase required for accumulation of repair proteins to sites of DNA damage. Acts with ube2n/ubc13 to amplify the rnf8-dependent histone ubiquitination. Recruited to sites of DNA damage at double-strand breaks (DSBs) by binding to ubiquitinated histone H2A and ubiquitinates histone H2A and H2AX, leading to amplify the rnf8-dependent H2A ubiquitination and promoting the formation of 'Lys-63'-linked ubiquitin conjugates. This leads to concentrate ubiquitinated histones H2A and H2AX at DNA lesions to the threshold required for recruitment of tp53bp1 and brca1. Catalyzes monoubiquitination of 'Lys-13' and 'Lys-15' of nucleosomal histone H2A (H2AK13Ub and H2AK15Ub, respectively). The chain is E3 ubiquitin-protein ligase rnf168 from Xenopus tropicalis (Western clawed frog).